The chain runs to 339 residues: GDP-fucose transporter 1 (339 aa).

Helical transmembrane passes span 9-29, 45-65, 82-102, 111-133, 136-156, 165-185, 209-229, and 237-257; these read SVRIAAVVAAYWTISISLVFL, LFVTWYQCVVTVICLFFLSLL, LSVAKQVLPLSAVFVGMITFN, VSFYNVGRSLTTVFNVICTYVIL, STSYKAVICCAVIIGGFLMGV, ISYSGVLFGVLASLCVSLNAI, ACFLFLPLMALLGEIGEVAHF, and FWLMMTIGGVFGIAIGYITGL. The tract at residues 319–339 is disordered; that stretch reads AHTIQASKDDKALQEDGQTKV. The segment covering 325–339 has biased composition (basic and acidic residues); that stretch reads SKDDKALQEDGQTKV.

This sequence belongs to the TPT transporter family. SLC35C subfamily.

The protein resides in the golgi apparatus membrane. The catalysed reaction is GMP(out) + GDP-beta-L-fucose(in) = GMP(in) + GDP-beta-L-fucose(out). Its function is as follows. Antiporter specific for GDP-l-fucose and depending on the concomitant reverse transport of GMP. Involved in GDP-fucose import from the cytoplasm into the Golgi lumen. The protein is GDP-fucose transporter 1 (slc35c1) of Nematostella vectensis (Starlet sea anemone).